The sequence spans 435 residues: Homoserine dehydrogenase (435 aa).

Positions 13, 14, and 104 each coordinate NADPH. Val14 is a binding site for NAD(+). Residues Val14 and Lys104 each contribute to the NADP(+) site. Na(+)-binding residues include Glu128, Val131, Gly133, and Ile135. NADP(+) contacts are provided by Gly186 and Glu189. Residues Glu189 and Asp200 each coordinate L-homoserine. Catalysis depends on Lys204, which acts as the Proton donor. Gly301 contributes to the NADPH binding site. Gly301 provides a ligand contact to NAD(+). Position 301 (Gly301) interacts with NADP(+). The region spanning 354–429 (YLRVQAKDEP…CVEKPITMIR (76 aa)) is the ACT domain.

This sequence belongs to the homoserine dehydrogenase family. As to quaternary structure, homotetramer. A metal cation serves as cofactor.

The enzyme catalyses L-homoserine + NAD(+) = L-aspartate 4-semialdehyde + NADH + H(+). It participates in amino-acid biosynthesis; L-methionine biosynthesis via de novo pathway; L-homoserine from L-aspartate: step 3/3. It functions in the pathway amino-acid biosynthesis; L-threonine biosynthesis; L-threonine from L-aspartate: step 3/5. With respect to regulation, neither NaCl nor KCl increase the activity. L-threonine and L-serine do not markedly inhibit the oxidation activity. Its function is as follows. Catalyzes the conversion of L-aspartate-beta-semialdehyde (L-Asa) to L-homoserine (L-Hse), the third step in the biosynthesis of threonine and methionine from aspartate. Is highly specific for NAD(+), and displays an approximate 479-fold (kcat/Km) preference for NAD(+) over NADP(+). This Neisseria gonorrhoeae (strain ATCC 700825 / FA 1090) protein is Homoserine dehydrogenase.